A 252-amino-acid polypeptide reads, in one-letter code: Probable transcriptional regulatory protein Tmel_0985 (252 aa).

The protein belongs to the TACO1 family.

The protein resides in the cytoplasm. The polypeptide is Probable transcriptional regulatory protein Tmel_0985 (Thermosipho melanesiensis (strain DSM 12029 / CIP 104789 / BI429)).